We begin with the raw amino-acid sequence, 237 residues long: Aspartate/glutamate leucyltransferase (237 aa).

Belongs to the R-transferase family. Bpt subfamily.

The protein localises to the cytoplasm. It catalyses the reaction N-terminal L-glutamyl-[protein] + L-leucyl-tRNA(Leu) = N-terminal L-leucyl-L-glutamyl-[protein] + tRNA(Leu) + H(+). The catalysed reaction is N-terminal L-aspartyl-[protein] + L-leucyl-tRNA(Leu) = N-terminal L-leucyl-L-aspartyl-[protein] + tRNA(Leu) + H(+). Functions in the N-end rule pathway of protein degradation where it conjugates Leu from its aminoacyl-tRNA to the N-termini of proteins containing an N-terminal aspartate or glutamate. The polypeptide is Aspartate/glutamate leucyltransferase (Marinobacter nauticus (strain ATCC 700491 / DSM 11845 / VT8) (Marinobacter aquaeolei)).